Here is a 321-residue protein sequence, read N- to C-terminus: Flagellin C (321 aa).

Belongs to the bacterial flagellin family.

It is found in the secreted. The protein localises to the bacterial flagellum. Its function is as follows. Flagellin is the subunit protein which polymerizes to form the filaments of bacterial flagella. This chain is Flagellin C (flaC), found in Rhizobium meliloti (strain 1021) (Ensifer meliloti).